Reading from the N-terminus, the 316-residue chain is MLKRNKVVLVGAGGVGSSFAYALTIDNSLVHELIIIDLAQDKAKGEVMDLNHGQMFLEKNIKIEFGNYDDCSDADIVVITAGLNQKPGETRLDLVGKNTKIFKEIVTSVVSSGFSGIFVIASNPVDIMTYVTMKYSNFPTHKVIGTGTTLDTSRLRYFLAERFNVNTQNIHSYIMGEHGDSSFATWDETKIAMKSLSEYLAEGKVSDAELDEMHKNVVNAAYEVIKLKGATYYAIGLGIKKIVNAIISDQNLILPISSYINGQYGNFVKDIYIGAPSVVCKDGIKEVLDFTISDRELEKFKISASQLKSYIDKIEF.

NAD(+)-binding positions include valine 15, aspartate 37, lysine 42, tyrosine 68, and 82 to 83; that span reads GL. Substrate is bound by residues glutamine 85, arginine 91, and 123–126; that span reads NPVD. NAD(+) is bound by residues 121–123 and threonine 146; that span reads ASN. 151–154 serves as a coordination point for substrate; it reads DTSR. Residues arginine 156 and histidine 171 each coordinate beta-D-fructose 1,6-bisphosphate. Histidine 178 serves as the catalytic Proton acceptor. Tyrosine 222 carries the post-translational modification Phosphotyrosine. Threonine 231 is a binding site for substrate.

The protein belongs to the LDH/MDH superfamily. LDH family. Homotetramer.

Its subcellular location is the cytoplasm. The enzyme catalyses (S)-lactate + NAD(+) = pyruvate + NADH + H(+). The protein operates within fermentation; pyruvate fermentation to lactate; (S)-lactate from pyruvate: step 1/1. Its activity is regulated as follows. Allosterically activated by fructose 1,6-bisphosphate (FBP). In terms of biological role, catalyzes the conversion of lactate to pyruvate. This chain is L-lactate dehydrogenase, found in Borrelia turicatae (strain 91E135).